Consider the following 193-residue polypeptide: 5'RNA triphosphatase A449R (193 aa).

It depends on Mn(2+) as a cofactor.

The enzyme catalyses a 5'-end triphospho-ribonucleoside in mRNA + H2O = a 5'-end diphospho-ribonucleoside in mRNA + phosphate + H(+). Catalyzes the first stes of cap formation: by removing the gamma-phosphate from the 5'-triphosphate end of nascent mRNA to yield a diphosphate end. In Chlorella (PBCV-1), this protein is 5'RNA triphosphatase A449R (A449R).